Here is a 571-residue protein sequence, read N- to C-terminus: MVNNILKAPEGPPSDVEEIKEKSDYLRGTLKEVMLDRISAGIPDDDNRLMKHHGSYLQDDRDLRNERQKQKLEPAYQFMLRVRMPGGVSTPEQWLVMDELAQKYGNNTLKLTTRETFQMHGILKWNMKKTIQKINAALLDTIAACGDVNRNVMCASNPHQSEIHAEVYEWSKKLSDDLLPRTRAYHEIWLDEERVAGTPDTETEPMYGPLYLPRKFKIGIAVPPSNDIDVYSQDLGFIAIVEEGRLIGFNVAIGGGMGMTHGDTATYPQLSKVIGFCKPEQLYDVAEKTITIQRDYGNRSVRKNARFKYTVDRLGLENVKAELENRLGWQLDEAKPYHFDHNGDRYGWVKGVKGKWHFTMFIEGGRVTDYENYKLMTGLREIAKVHTGDFRLTSNQNLIIGNVSSQKKKQISALIEQYGLTDGRQHSALRRSSMACVALPTCGLAMAEAERYLPKLIDKIEDIVDENGLRDEEITIRMTGCPNGCARHALGEIGFIGKAPGKYNMYLGAAFDGSRLSKMYRENIGEEEILSELRTILPRYAKEREEGEHFGDFVIRAGIIKATTDGTNFHE.

Positions 436, 442, 481, and 485 each coordinate [4Fe-4S] cluster. C485 lines the siroheme pocket.

It belongs to the nitrite and sulfite reductase 4Fe-4S domain family. Alpha(8)-beta(8). The alpha component is a flavoprotein, the beta component is a hemoprotein. It depends on siroheme as a cofactor. The cofactor is [4Fe-4S] cluster.

It catalyses the reaction hydrogen sulfide + 3 NADP(+) + 3 H2O = sulfite + 3 NADPH + 4 H(+). It participates in sulfur metabolism; hydrogen sulfide biosynthesis; hydrogen sulfide from sulfite (NADPH route): step 1/1. Its function is as follows. Component of the sulfite reductase complex that catalyzes the 6-electron reduction of sulfite to sulfide. This is one of several activities required for the biosynthesis of L-cysteine from sulfate. This Bacillus velezensis (strain DSM 23117 / BGSC 10A6 / LMG 26770 / FZB42) (Bacillus amyloliquefaciens subsp. plantarum) protein is Sulfite reductase [NADPH] hemoprotein beta-component.